A 1017-amino-acid polypeptide reads, in one-letter code: Protein translocase subunit SecA 1 (1017 aa).

ATP contacts are provided by residues Gln-143, 161-165 (GEGKT), and Asp-661. Positions 978 to 999 (GLNDDDEPLPAQPITTEQKPGR) are disordered. Positions 1003, 1005, 1014, and 1015 each coordinate Zn(2+).

This sequence belongs to the SecA family. Monomer and homodimer. Part of the essential Sec protein translocation apparatus which comprises SecA, SecYEG and auxiliary proteins SecDF. Other proteins may also be involved. Requires Zn(2+) as cofactor.

The protein resides in the cell inner membrane. The protein localises to the cytoplasm. The enzyme catalyses ATP + H2O + cellular proteinSide 1 = ADP + phosphate + cellular proteinSide 2.. In terms of biological role, part of the Sec protein translocase complex. Interacts with the SecYEG preprotein conducting channel. Has a central role in coupling the hydrolysis of ATP to the transfer of proteins into and across the cell membrane, serving as an ATP-driven molecular motor driving the stepwise translocation of polypeptide chains across the membrane. This chain is Protein translocase subunit SecA 1, found in Chlorobium chlorochromatii (strain CaD3).